We begin with the raw amino-acid sequence, 309 residues long: HTH-type transcriptional activator AaeR (309 aa).

The 59-residue stretch at 1–59 folds into the HTH lysR-type domain; that stretch reads MERLKRMSVFAKVVEFGSFTAAARQLQMSVSSISQTVSKLEDELQVKLLNRSTRSIGLT. Residues 19–38 constitute a DNA-binding region (H-T-H motif); sequence FTAAARQLQMSVSSISQTVS.

This sequence belongs to the LysR transcriptional regulatory family.

Activity is regulated by p-hydroxybenzoic acid. Transcriptional regulator that activates expression of the aaeXAB operon, which is involved in the efflux of aromatic carboxylic acids such as p-hydroxybenzoic acid (pHBA). In the presence of the effector pHBA, acts by binding to a single target within the aaeXAB-aaeR intergenic region. In the absence of pHBA, binds more than 50 sites along the E.coli K12 genome, including genes related to biofilm formation and several genes involved in stress response, suggesting that it might play a role in quorum sensing in the absence of pHBA. This is HTH-type transcriptional activator AaeR from Escherichia coli (strain K12).